The sequence spans 151 residues: Acidic phospholipase A2 6 (151 aa).

The first 27 residues, 1–27, serve as a signal peptide directing secretion; it reads MYPAHLLVLLAVCVSLLGAASIPARPL. 7 disulfides stabilise this stretch: cysteine 38–cysteine 104, cysteine 54–cysteine 151, cysteine 56–cysteine 72, cysteine 71–cysteine 132, cysteine 78–cysteine 125, cysteine 88–cysteine 118, and cysteine 111–cysteine 123. Ca(2+) is bound by residues tyrosine 55, glycine 57, and glycine 59. Residue histidine 75 is part of the active site. A Ca(2+)-binding site is contributed by aspartate 76. Residue aspartate 126 is part of the active site.

Belongs to the phospholipase A2 family. Group I subfamily. D49 sub-subfamily. Ca(2+) is required as a cofactor. Expressed by the venom gland.

It localises to the secreted. The catalysed reaction is a 1,2-diacyl-sn-glycero-3-phosphocholine + H2O = a 1-acyl-sn-glycero-3-phosphocholine + a fatty acid + H(+). PLA2 catalyzes the calcium-dependent hydrolysis of the 2-acyl groups in 3-sn-phosphoglycerides. The protein is Acidic phospholipase A2 6 of Tropidechis carinatus (Australian rough-scaled snake).